Here is a 314-residue protein sequence, read N- to C-terminus: Protein phosphatase PTC7 homolog fig (314 aa).

Positions 43–309 (PYLVTVVQGR…DDITLILSSV (267 aa)) constitute a PPM-type phosphatase domain. The Mn(2+) site is built by D87, G88, and D232.

It belongs to the PP2C family. The cofactor is Mg(2+). It depends on Mn(2+) as a cofactor.

It carries out the reaction O-phospho-L-seryl-[protein] + H2O = L-seryl-[protein] + phosphate. The enzyme catalyses O-phospho-L-threonyl-[protein] + H2O = L-threonyl-[protein] + phosphate. In Drosophila sechellia (Fruit fly), this protein is Protein phosphatase PTC7 homolog fig.